The chain runs to 94 residues: DASH complex subunit DAD1 (94 aa).

Position 91 is a phosphoserine (serine 91).

It belongs to the DASH complex DAD1 family. In terms of assembly, component of the DASH complex consisting of ASK1, DAD1, DAD2, DAD3, DAD4, DAM1, DUO1, HSK3, SPC19 and SPC34, with a stoichiometry of one copy of each subunit per complex. Multiple DASH complexes oligomerize to form a ring that encircles spindle microtubules and organizes the rod-like NDC80 complexes of the outer kinetochore. DASH complex oligomerization strengthens microtubule attachments. On cytoplasmic microtubules, DASH complexes appear to form patches instead of rings.

It is found in the nucleus. The protein resides in the cytoplasm. The protein localises to the cytoskeleton. Its subcellular location is the spindle. It localises to the chromosome. It is found in the centromere. The protein resides in the kinetochore. Component of the DASH complex that connects microtubules with kinetochores and couples microtubule depolymerisation to chromosome movement; it is involved in retrieving kinetochores to the spindle poles before their re-orientation on the spindle in early mitosis and allows microtubule depolymerization to pull chromosomes apart and resist detachment during anaphase. Kinetochores, consisting of a centromere-associated inner segment and a microtubule-contacting outer segment, play a crucial role in chromosome segregation by mediating the physical connection between centromeric DNA and microtubules. Kinetochores also serve as an input point for the spindle assembly checkpoint, which delays anaphase until all chromosomes have bioriented on the mitotic spindle. During spindle-kinetochore attachment, kinetochores first attach to the lateral surface of spindle microtubules, which supports the congression of chromosomes toward the middle of the dividing cell; they then slide along towards the spindle pole, a process independent of the DASH complex but requiring the NDC80 complex. When the end of a disassembling microtubule reaches the laterally attached kinetochore, the DASH complex together with the NDC80 complex and STU2 convert lateral attachment to end-on capture to produce a structure that can track with microtubule shortening and sustain attachment when tension is applied across sister kinetochores upon their biorientation. Microtubule depolymerization proceeds by protofilament splaying and induces the kinetochore-attached DASH complex to slide longitudinally, thereby helping to transduce depolymerization energy into pulling forces to disjoin chromatids. Incorrect microtubule attachments are corrected by releasing microubules from the kinetochore through phosphorylation by IPL1 of kinetochore components. Links the microtubule cytoskeleton to chromosomes during interphase. Also contributes to the poleward transport of kinetochores on microtubules following centromeric DNA replication in S-phase. The polypeptide is DASH complex subunit DAD1 (DAD1) (Saccharomyces cerevisiae (strain ATCC 204508 / S288c) (Baker's yeast)).